The following is a 414-amino-acid chain: Esterase FrsA (414 aa).

This sequence belongs to the FrsA family.

It catalyses the reaction a carboxylic ester + H2O = an alcohol + a carboxylate + H(+). In terms of biological role, catalyzes the hydrolysis of esters. The polypeptide is Esterase FrsA (Escherichia coli O139:H28 (strain E24377A / ETEC)).